We begin with the raw amino-acid sequence, 279 residues long: Lacto-N-neotetraose biosynthesis glycosyltransferase LgtB (279 aa).

This sequence belongs to the glycosyltransferase 25 family.

It participates in glycan metabolism; lacto-N-neotetraose biosynthesis. It functions in the pathway bacterial outer membrane biogenesis; lipooligosaccharide biosynthesis. Adds the second galactose to the lacto-N-tetraose chain in lipooligosaccharide (LOS). The chain is Lacto-N-neotetraose biosynthesis glycosyltransferase LgtB (lgtB) from Neisseria meningitidis serogroup A / serotype 4A (strain DSM 15465 / Z2491).